The following is a 537-amino-acid chain: Pentatricopeptide repeat-containing protein At4g32450, mitochondrial (537 aa).

Residues 1–110 constitute a mitochondrion transit peptide; the sequence is MIYTLTRGSL…EHSEIINQRN (110 aa). Polar residues predominate over residues 113–140; it reads WQSSDGCSSYGTTGNGVPQENNTGGNHF. The disordered stretch occupies residues 113–148; it reads WQSSDGCSSYGTTGNGVPQENNTGGNHFQQDHSGHS. PPR repeat units follow at residues 145-179, 180-210, 215-249, 250-280, 281-316, and 317-347; these read SGHS…GYVV, DLPR…ITSS, DISA…NLET, WCGV…GNKP, DGEM…GIIP, and CMEH…MEPN. The tract at residues 412–442 is type E(+) motif; it reads YGIRYMAAGDISRPENRELYMALKSLKEHMI. A type DYW motif region spans residues 443–537; that stretch reads EIGYVPLSKL…DGVCSCREYW (95 aa).

It belongs to the PPR family. PCMP-H subfamily.

It localises to the mitochondrion. The chain is Pentatricopeptide repeat-containing protein At4g32450, mitochondrial (PCMP-H63) from Arabidopsis thaliana (Mouse-ear cress).